Consider the following 346-residue polypeptide: Histidinol-phosphate aminotransferase (346 aa).

Residue Lys209 is modified to N6-(pyridoxal phosphate)lysine.

This sequence belongs to the class-II pyridoxal-phosphate-dependent aminotransferase family. Histidinol-phosphate aminotransferase subfamily. As to quaternary structure, homodimer. Pyridoxal 5'-phosphate serves as cofactor.

It carries out the reaction L-histidinol phosphate + 2-oxoglutarate = 3-(imidazol-4-yl)-2-oxopropyl phosphate + L-glutamate. The protein operates within amino-acid biosynthesis; L-histidine biosynthesis; L-histidine from 5-phospho-alpha-D-ribose 1-diphosphate: step 7/9. This is Histidinol-phosphate aminotransferase from Vibrio vulnificus (strain CMCP6).